The chain runs to 190 residues: Putative 3-methyladenine DNA glycosylase (190 aa).

It belongs to the DNA glycosylase MPG family.

The protein is Putative 3-methyladenine DNA glycosylase of Corynebacterium efficiens (strain DSM 44549 / YS-314 / AJ 12310 / JCM 11189 / NBRC 100395).